A 287-amino-acid polypeptide reads, in one-letter code: Glutamate racemase (287 aa).

A compositionally biased stretch (polar residues) spans 1–15 (MATKPQDANTTSREA). A disordered region spans residues 1 to 25 (MATKPQDANTTSREAITSKADSPPR). Substrate contacts are provided by residues 32-33 (DS) and 64-65 (YG). Catalysis depends on Cys-96, which acts as the Proton donor/acceptor. Residue 97–98 (NT) coordinates substrate. The active-site Proton donor/acceptor is the Cys-208. 209–210 (TH) is a binding site for substrate.

The protein belongs to the aspartate/glutamate racemases family.

The enzyme catalyses L-glutamate = D-glutamate. It participates in cell wall biogenesis; peptidoglycan biosynthesis. In terms of biological role, provides the (R)-glutamate required for cell wall biosynthesis. The sequence is that of Glutamate racemase from Yersinia pseudotuberculosis serotype O:1b (strain IP 31758).